Reading from the N-terminus, the 570-residue chain is Proline--tRNA ligase (570 aa).

A disordered region spans residues 238–257; that stretch reads ARPAPAEHAEPRPLEKVETP.

The protein belongs to the class-II aminoacyl-tRNA synthetase family. ProS type 1 subfamily. In terms of assembly, homodimer.

The protein localises to the cytoplasm. It carries out the reaction tRNA(Pro) + L-proline + ATP = L-prolyl-tRNA(Pro) + AMP + diphosphate. Its function is as follows. Catalyzes the attachment of proline to tRNA(Pro) in a two-step reaction: proline is first activated by ATP to form Pro-AMP and then transferred to the acceptor end of tRNA(Pro). As ProRS can inadvertently accommodate and process non-cognate amino acids such as alanine and cysteine, to avoid such errors it has two additional distinct editing activities against alanine. One activity is designated as 'pretransfer' editing and involves the tRNA(Pro)-independent hydrolysis of activated Ala-AMP. The other activity is designated 'posttransfer' editing and involves deacylation of mischarged Ala-tRNA(Pro). The misacylated Cys-tRNA(Pro) is not edited by ProRS. The sequence is that of Proline--tRNA ligase from Geobacter sulfurreducens (strain ATCC 51573 / DSM 12127 / PCA).